A 236-amino-acid chain; its full sequence is DNA repair protein RecO (236 aa).

This sequence belongs to the RecO family.

In terms of biological role, involved in DNA repair and RecF pathway recombination. This chain is DNA repair protein RecO, found in Rickettsia typhi (strain ATCC VR-144 / Wilmington).